Consider the following 313-residue polypeptide: Protoheme IX farnesyltransferase (313 aa).

Helical transmembrane passes span 22 to 42 (FALLKPRVMSLVVFTAFVGLM), 46 to 66 (IGVHPVIGFCAILFIAIGGGA), 98 to 118 (GEALSLGLALSGLSVIMLALA), 121 to 141 (VFAGAFLAFTIFFYVVIYTMW), 150 to 170 (IVIGGAAGAFPPVIGWIAATG), 177 to 197 (WLMFALTFLWTPPHFWALALF), 223 to 243 (ILVYTVILAAFALTTAFTSVG), 246 to 266 (IYLTTAVVLNALFLKGAVQIW), and 284 to 304 (FFKLSLLYLFLHFGAILAEAL).

Belongs to the UbiA prenyltransferase family. Protoheme IX farnesyltransferase subfamily. Interacts with CtaA.

It is found in the cell inner membrane. It catalyses the reaction heme b + (2E,6E)-farnesyl diphosphate + H2O = Fe(II)-heme o + diphosphate. Its pathway is porphyrin-containing compound metabolism; heme O biosynthesis; heme O from protoheme: step 1/1. Converts heme B (protoheme IX) to heme O by substitution of the vinyl group on carbon 2 of heme B porphyrin ring with a hydroxyethyl farnesyl side group. The sequence is that of Protoheme IX farnesyltransferase from Ruegeria sp. (strain TM1040) (Silicibacter sp.).